The following is a 64-amino-acid chain: Orcokinin peptides (64 aa).

2 propeptides span residues 1–6 (MNIRPG) and 23–24 (NI).

This sequence belongs to the orcokinin family. Orcokinin-3 is expressed throughout the central nervous system (at protein level).

The protein localises to the secreted. In terms of biological role, myotropic peptides. In Camponotus floridanus (Florida carpenter ant), this protein is Orcokinin peptides.